An 81-amino-acid chain; its full sequence is uncharacterized protein (81 aa).

The tract at residues 55–81 (LDKRNSNNKIEKSENTGENHDNNQDQK) is disordered.

This is an uncharacterized protein from Thermoproteus tenax virus 1 (strain KRA1) (TTV1).